A 202-amino-acid polypeptide reads, in one-letter code: Nucleoside triphosphate pyrophosphatase (202 aa).

D79 serves as the catalytic Proton acceptor.

It belongs to the Maf family. It depends on a divalent metal cation as a cofactor.

The protein localises to the cytoplasm. The catalysed reaction is a ribonucleoside 5'-triphosphate + H2O = a ribonucleoside 5'-phosphate + diphosphate + H(+). It carries out the reaction a 2'-deoxyribonucleoside 5'-triphosphate + H2O = a 2'-deoxyribonucleoside 5'-phosphate + diphosphate + H(+). In terms of biological role, nucleoside triphosphate pyrophosphatase. May have a dual role in cell division arrest and in preventing the incorporation of modified nucleotides into cellular nucleic acids. This chain is Nucleoside triphosphate pyrophosphatase, found in Rhodospirillum rubrum (strain ATCC 11170 / ATH 1.1.1 / DSM 467 / LMG 4362 / NCIMB 8255 / S1).